The primary structure comprises 327 residues: uncharacterized protein (327 aa).

A compositionally biased stretch (low complexity) spans 1 to 17; the sequence is MASMAAAIAASRSAVMS. The tract at residues 1-22 is disordered; it reads MASMAAAIAASRSAVMSGNRPL. Alanine 2 carries the post-translational modification N-acetylalanine. A Phosphoserine modification is found at serine 37. Residues 76–113 are disordered; the sequence is GPRAPAPRDPGDSEELTRFPGLRGPTGQKVVRFGDEDL. Serine 129 is modified (phosphoserine). Residues 134–148 show a composition bias toward polar residues; that stretch reads SISALSIQEPSNGTA. Residues 134–299 are disordered; the sequence is SISALSIQEP…PDVRQDDGED (166 aa). A compositionally biased stretch (low complexity) spans 162–176; the sequence is SQALKSSQGSRSSSL. Serine 175 carries the phosphoserine modification. Composition is skewed to basic and acidic residues over residues 182–202 and 233–252; these read TRKE…RGEG and PAPK…RQEQ. At serine 289 the chain carries Phosphoserine.

It localises to the cytoplasm. This is an uncharacterized protein from Homo sapiens (Human).